The following is an 89-amino-acid chain: Large ribosomal subunit protein uL23cz/uL23cy (89 aa).

It belongs to the universal ribosomal protein uL23 family. As to quaternary structure, part of the 50S ribosomal subunit.

It is found in the plastid. Its subcellular location is the chloroplast. Its function is as follows. Binds to 23S rRNA. This Calycanthus floridus var. glaucus (Eastern sweetshrub) protein is Large ribosomal subunit protein uL23cz/uL23cy (rpl23-A).